Here is a 934-residue protein sequence, read N- to C-terminus: Protein translocase subunit SecA (934 aa).

Residues Gln87, 105–109 (GEGKT), and Asp515 contribute to the ATP site. The Zn(2+) site is built by Cys918, Cys920, Cys929, and His930.

It belongs to the SecA family. Monomer and homodimer. Part of the essential Sec protein translocation apparatus which comprises SecA, SecYEG and auxiliary proteins SecDF-YajC and YidC. Zn(2+) serves as cofactor.

Its subcellular location is the cell inner membrane. The protein resides in the cytoplasm. It carries out the reaction ATP + H2O + cellular proteinSide 1 = ADP + phosphate + cellular proteinSide 2.. Its function is as follows. Part of the Sec protein translocase complex. Interacts with the SecYEG preprotein conducting channel. Has a central role in coupling the hydrolysis of ATP to the transfer of proteins into and across the cell membrane, serving both as a receptor for the preprotein-SecB complex and as an ATP-driven molecular motor driving the stepwise translocation of polypeptide chains across the membrane. The polypeptide is Protein translocase subunit SecA (Ralstonia nicotianae (strain ATCC BAA-1114 / GMI1000) (Ralstonia solanacearum)).